The following is a 91-amino-acid chain: Small ribosomal subunit protein bS18 (91 aa).

Belongs to the bacterial ribosomal protein bS18 family. In terms of assembly, part of the 30S ribosomal subunit. Forms a tight heterodimer with protein bS6.

Functionally, binds as a heterodimer with protein bS6 to the central domain of the 16S rRNA, where it helps stabilize the platform of the 30S subunit. This Paraburkholderia xenovorans (strain LB400) protein is Small ribosomal subunit protein bS18.